A 282-amino-acid chain; its full sequence is Small ribosomal subunit protein uS3 (282 aa).

The region spanning 43-111 is the KH type-2 domain; it reads IRQLMSTGME…QVQLNILEVK (69 aa). Residues 218 to 282 are disordered; that stretch reads QQAASAPSRG…AAVATEGSDA (65 aa). Residues 230–262 show a composition bias toward basic and acidic residues; sequence PRRDGDDRGPRRENSGPRRDGGNLRSQRNDRNE. A compositionally biased stretch (low complexity) spans 263–276; it reads NAAVEAAPAAAAVA.

It belongs to the universal ribosomal protein uS3 family. As to quaternary structure, part of the 30S ribosomal subunit. Forms a tight complex with proteins S10 and S14.

Binds the lower part of the 30S subunit head. Binds mRNA in the 70S ribosome, positioning it for translation. The protein is Small ribosomal subunit protein uS3 of Renibacterium salmoninarum (strain ATCC 33209 / DSM 20767 / JCM 11484 / NBRC 15589 / NCIMB 2235).